The chain runs to 30 residues: LIM and SH3 domain protein 1 (30 aa).

Met1 is subject to N-acetylmethionine. In terms of domain architecture, LIM zinc-binding spans 5–30; that stretch reads CARCGKIVYPTEKVNCLDKFWHKACF.

In terms of assembly, interacts with F-actin. Interacts with ANKRD54. Interacts with KBTBD10. Phosphorylated.

The protein localises to the cytoplasm. It localises to the cell cortex. Its subcellular location is the cytoskeleton. Plays an important role in the regulation of dynamic actin-based, cytoskeletal activities. Agonist-dependent changes in LASP1 phosphorylation may also serve to regulate actin-associated ion transport activities, not only in the parietal cell but also in certain other F-actin-rich secretory epithelial cell types. The protein is LIM and SH3 domain protein 1 (LASP1) of Sus scrofa (Pig).